A 348-amino-acid polypeptide reads, in one-letter code: LRP2-binding protein (348 aa).

Residues 60 to 93 (TLAYFLRGQLYFEEGWYEEALEQFEEIEEKDHQA) form a TPR repeat. Sel1-like repeat units follow at residues 94 to 126 (TYQL…DSPC), 134 to 169 (FAAA…DNGN), 174 to 207 (VKAQ…GNGN), 208 to 243 (LESQ…ERGN), 244 to 278 (VYAQ…EVHD), and 298 to 333 (AMAS…RLNP).

Interacts with LRP2.

It is found in the cytoplasm. Its function is as follows. May act as an adapter that regulates LRP2 function. The polypeptide is LRP2-binding protein (LRP2BP) (Macaca fascicularis (Crab-eating macaque)).